Consider the following 300-residue polypeptide: Free fatty acid receptor 1 (300 aa).

The Extracellular portion of the chain corresponds to 1 to 8 (MDLPPQLS). A helical transmembrane segment spans residues 9 to 31 (FALYVSAFALGFPLNLLAIRGAV). Residues 32-41 (SHAKLRLTPS) lie on the Cytoplasmic side of the membrane. The chain crosses the membrane as a helical span at residues 42-64 (LVYTLHLACSDLLLAITLPLKAV). Residues 65-79 (EALASGVWPLPLPFC) are Extracellular-facing. A disulfide bond links Cys79 and Cys170. A helical transmembrane segment spans residues 80-101 (PVFALAHFAPLYAGGGFLAALS). The Cytoplasmic segment spans residues 102–121 (AGRYLGAAFPFGYQAIRRPC). A helical transmembrane segment spans residues 122-142 (YSWGVCVAIWALVLCHLGLAL). The Extracellular portion of the chain corresponds to 143–178 (GLEAPRGWVDNTTSSLGINIPVNGSPVCLEAWDPDS). Residue Asn153 is glycosylated (N-linked (GlcNAc...) asparagine). Residues 179–200 (ARPARLSFSILLFFLPLVITAF) traverse the membrane as a helical segment. The Cytoplasmic segment spans residues 201–223 (CYVGCLRALVHSGLSHKRKLRAA). The chain crosses the membrane as a helical span at residues 224–248 (WVAGGALLTLLLCLGPYNASNVASF). At 249 to 256 (INPDLEGS) the chain is on the extracellular side. The chain crosses the membrane as a helical span at residues 257 to 279 (WRKLGLITGAWSVVLNPLVTGYL). At 280–300 (GTGPGQGTICVTRTPRGTIQK) the chain is on the cytoplasmic side.

It belongs to the G-protein coupled receptor 1 family. In terms of tissue distribution, expressed abundantly in pancreatic beta cells.

Its subcellular location is the cell membrane. In terms of biological role, G-protein coupled receptor for medium and long chain saturated and unsaturated fatty acids that plays an important role in glucose homeostasis. Fatty acid binding increases glucose-stimulated insulin secretion, and may also enhance the secretion of glucagon-like peptide 1 (GLP-1). May also play a role in bone homeostasis; receptor signaling activates pathways that inhibit osteoclast differentiation. Ligand binding leads to a conformation change that triggers signaling via G-proteins that activate phospholipase C, leading to an increase of the intracellular calcium concentration. Seems to act through a G(q) and G(i)-mediated pathway. Mediates the anti-inflammatory effects of omega-3 polyunsaturated fatty acids (PUFAs) via inhibition of NLRP3 inflammasome activation. In Rattus norvegicus (Rat), this protein is Free fatty acid receptor 1 (Ffar1).